A 263-amino-acid chain; its full sequence is Uracil-DNA glycosylase (263 aa).

The active-site Proton acceptor is aspartate 94.

Belongs to the uracil-DNA glycosylase (UDG) superfamily. UNG family.

It localises to the cytoplasm. The catalysed reaction is Hydrolyzes single-stranded DNA or mismatched double-stranded DNA and polynucleotides, releasing free uracil.. Its function is as follows. Excises uracil residues from the DNA which can arise as a result of misincorporation of dUMP residues by DNA polymerase or due to deamination of cytosine. The protein is Uracil-DNA glycosylase of Ralstonia pickettii (strain 12J).